Reading from the N-terminus, the 558-residue chain is Trehalase 1 (558 aa).

Belongs to the glycosyl hydrolase 15 family.

It catalyses the reaction alpha,alpha-trehalose + H2O = alpha-D-glucose + beta-D-glucose. It functions in the pathway glycan degradation; trehalose degradation; D-glucose from alpha,alpha-trehalose: step 1/1. Functionally, catalyzes the hydrolysis of alpha,alpha-trehalose into two molecules of D-glucose. This chain is Trehalase 1 (treH1), found in Sulfolobus acidocaldarius (strain ATCC 33909 / DSM 639 / JCM 8929 / NBRC 15157 / NCIMB 11770).